A 333-amino-acid chain; its full sequence is GDP-mannose transporter GONST1 (333 aa).

A run of 9 helical transmembrane segments spans residues 33–55 (ALLSGLAYCISSCSMILVNKFVL), 62–84 (AGIFLMLYQNFVSVIIVVGLSLM), 99–121 (VWFPVNVIFVGMLITSMFSLKYI), 153–170 (VWAALFLMIISAVSGGIT), 174–196 (FNAVGYAWQIANCFLTASYSLTL), 216–238 (SMVLLNNTLSLPLGLLLSYFFNE), 253–275 (FWMVMTLSGLLGLAISFTSMWFL), 282–304 (TYSLVGSLNKIPLSIAGIVLFNV), and 308–325 (LQNSASILFGLVAGVVFA).

This sequence belongs to the nucleotide-sugar transporter family. GDP-Mannose:GMP antiporter (GMA) (TC 2.A.7.13) subfamily.

Its subcellular location is the golgi apparatus membrane. Its function is as follows. Involved in the import of GDP-mannose from the cytoplasm into the Golgi lumen. Required for the luminal synthesis of a variety of plant cell surface components. Is required for the correct mannosylation of the glycosylinositol phosphoceramides (GIPC). Can indifferently transport GDP-mannose, GDP-Glucose, GDP-Fucose or GDP-Galactose in vitro. The sequence is that of GDP-mannose transporter GONST1 from Arabidopsis thaliana (Mouse-ear cress).